The sequence spans 311 residues: Meteorin-like protein (311 aa).

An N-terminal signal peptide occupies residues 1-45; sequence MRGAVWAARRRAGQQWPRSPGPGPGPPPPPPLLLLLLLLLGGASA. The cysteines at positions 52 and 75 are disulfide-linked. The N-linked (GlcNAc...) asparagine glycan is linked to Asn-103. 4 disulfide bridges follow: Cys-107–Cys-143, Cys-188–Cys-260, Cys-191–Cys-284, and Cys-201–Cys-306.

This sequence belongs to the meteorin family. N-glycosylated. Highly expressed in subcutaneous adipose tissue.

The protein localises to the secreted. Hormone induced following exercise or cold exposure that promotes energy expenditure. Induced either in the skeletal muscle after exercise or in adipose tissue following cold exposure and is present in the circulation. Able to stimulate energy expenditure associated with the browning of the white fat depots and improves glucose tolerance. Does not promote an increase in a thermogenic gene program via direct action on adipocytes, but acts by stimulating several immune cell subtypes to enter the adipose tissue and activate their prothermogenic actions. Stimulates an eosinophil-dependent increase in IL4 expression and promotes alternative activation of adipose tissue macrophages, which are required for the increased expression of the thermogenic and anti-inflammatory gene programs in fat. Required for some cold-induced thermogenic responses, suggesting a role in metabolic adaptations to cold temperatures. The protein is Meteorin-like protein (Metrnl) of Mus musculus (Mouse).